The following is a 213-amino-acid chain: ATP-dependent Clp protease proteolytic subunit (213 aa).

Residue serine 114 is the Nucleophile of the active site. Residue histidine 139 is part of the active site.

The protein belongs to the peptidase S14 family. Fourteen ClpP subunits assemble into 2 heptameric rings which stack back to back to give a disk-like structure with a central cavity, resembling the structure of eukaryotic proteasomes.

The protein resides in the cytoplasm. It catalyses the reaction Hydrolysis of proteins to small peptides in the presence of ATP and magnesium. alpha-casein is the usual test substrate. In the absence of ATP, only oligopeptides shorter than five residues are hydrolyzed (such as succinyl-Leu-Tyr-|-NHMec, and Leu-Tyr-Leu-|-Tyr-Trp, in which cleavage of the -Tyr-|-Leu- and -Tyr-|-Trp bonds also occurs).. Cleaves peptides in various proteins in a process that requires ATP hydrolysis. Has a chymotrypsin-like activity. Plays a major role in the degradation of misfolded proteins. The sequence is that of ATP-dependent Clp protease proteolytic subunit from Methylobacillus flagellatus (strain ATCC 51484 / DSM 6875 / VKM B-1610 / KT).